Consider the following 430-residue polypeptide: Phosphomethylpyrimidine synthase (430 aa).

Substrate is bound by residues Asn67, Met96, Tyr125, His161, 183–185, 224–227, and Glu263; these read SRG and DALR. His267 provides a ligand contact to Zn(2+). Tyr290 provides a ligand contact to substrate. His331 contacts Zn(2+). Residues Cys406, Cys409, and Cys413 each coordinate [4Fe-4S] cluster.

Belongs to the ThiC family. In terms of assembly, homodimer. The cofactor is [4Fe-4S] cluster.

It carries out the reaction 5-amino-1-(5-phospho-beta-D-ribosyl)imidazole + S-adenosyl-L-methionine = 4-amino-2-methyl-5-(phosphooxymethyl)pyrimidine + CO + 5'-deoxyadenosine + formate + L-methionine + 3 H(+). The protein operates within cofactor biosynthesis; thiamine diphosphate biosynthesis. Its function is as follows. Catalyzes the synthesis of the hydroxymethylpyrimidine phosphate (HMP-P) moiety of thiamine from aminoimidazole ribotide (AIR) in a radical S-adenosyl-L-methionine (SAM)-dependent reaction. This chain is Phosphomethylpyrimidine synthase, found in Campylobacter jejuni subsp. jejuni serotype O:6 (strain 81116 / NCTC 11828).